The sequence spans 348 residues: MTALFQSWGLPYDWAWFVSTIIGILVIALPLMLAVAMIIYADRKIWAAMALRRGPNVVGPWGLLQSFADGAKVFLQETIIPAAANKGLFLLAPIITFTVALIVWAVIPFAPGVVLADINIGLLYVLAASSIGVYGVIIAGWASNSKYPFYSALRAAAQMVSYEVSIGFVLISVVLWTGSFNMSAIVEGQRAHIFGFINGYGFNPLLFPMAVVFLISAMAETARTPFDLTEAESELVAGYQTEYSSMSFALYWLGEYANVILMCGLNAILFWGGWLPPVDWAPLYMVPGIIWFFAKLLFFFFVFSWVKATVPRYRYDQLMRLGWKVFLPLSLFWVFLVSGWLMLTRYGV.

8 consecutive transmembrane segments (helical) span residues 21–41 (IIGI…IIYA), 87–107 (GLFL…WAVI), 120–140 (IGLL…IIAG), 166–186 (IGFV…SAIV), 193–213 (IFGF…AVVF), 258–278 (NVIL…LPPV), 283–303 (LYMV…FFVF), and 323–343 (WKVF…WLML).

This sequence belongs to the complex I subunit 1 family. As to quaternary structure, NDH-1 is composed of 14 different subunits. Subunits NuoA, H, J, K, L, M, N constitute the membrane sector of the complex.

The protein resides in the cell inner membrane. It carries out the reaction a quinone + NADH + 5 H(+)(in) = a quinol + NAD(+) + 4 H(+)(out). Functionally, NDH-1 shuttles electrons from NADH, via FMN and iron-sulfur (Fe-S) centers, to quinones in the respiratory chain. The immediate electron acceptor for the enzyme in this species is believed to be ubiquinone. Couples the redox reaction to proton translocation (for every two electrons transferred, four hydrogen ions are translocated across the cytoplasmic membrane), and thus conserves the redox energy in a proton gradient. This subunit may bind ubiquinone. The polypeptide is NADH-quinone oxidoreductase subunit H (Rhizorhabdus wittichii (strain DSM 6014 / CCUG 31198 / JCM 15750 / NBRC 105917 / EY 4224 / RW1) (Sphingomonas wittichii)).